The following is a 516-amino-acid chain: Rho guanine nucleotide exchange factor 9 (516 aa).

One can recognise an SH3 domain in the interval 8 to 67 (DSIVSAEAVWDHVTMANRELAFKAGDVIKVLDASNKDWWWGQIDDEEGWFPASFVRLWVN). Residues 100-110 (RDQMRANVINE) form an interaction with GPHN region. Residues 103 to 287 (MRANVINEIM…RNVTQQINER (185 aa)) enclose the DH domain. Positions 318–425 (ELIYTGEMAW…WLRAFREERK (108 aa)) constitute a PH domain. A disordered region spans residues 453-480 (PKQKGVNSARSVPPSYPPPQDPLNHGQY). Phosphoserine is present on S502.

As to quaternary structure, interacts with GPHN. As to expression, detected in brain. Detected at low levels in heart.

The protein localises to the cytoplasm. The protein resides in the postsynaptic density. Functionally, acts as a guanine nucleotide exchange factor (GEF) for CDC42. Promotes formation of GPHN clusters. The chain is Rho guanine nucleotide exchange factor 9 (ARHGEF9) from Homo sapiens (Human).